The primary structure comprises 333 residues: Anthranilate phosphoribosyltransferase (333 aa).

5-phospho-alpha-D-ribose 1-diphosphate contacts are provided by residues Gly81, 84-85 (GD), Thr89, 91-94 (NIST), 109-117 (KHGNRSVSS), and Ala121. An anthranilate-binding site is contributed by Gly81. Ser93 is a Mg(2+) binding site. Asn112 serves as a coordination point for anthranilate. Residue Arg167 coordinates anthranilate. Residues Asp225 and Glu226 each contribute to the Mg(2+) site.

This sequence belongs to the anthranilate phosphoribosyltransferase family. As to quaternary structure, homodimer. Mg(2+) is required as a cofactor.

The enzyme catalyses N-(5-phospho-beta-D-ribosyl)anthranilate + diphosphate = 5-phospho-alpha-D-ribose 1-diphosphate + anthranilate. It participates in amino-acid biosynthesis; L-tryptophan biosynthesis; L-tryptophan from chorismate: step 2/5. In terms of biological role, catalyzes the transfer of the phosphoribosyl group of 5-phosphorylribose-1-pyrophosphate (PRPP) to anthranilate to yield N-(5'-phosphoribosyl)-anthranilate (PRA). The polypeptide is Anthranilate phosphoribosyltransferase (Haemophilus influenzae (strain PittGG)).